Reading from the N-terminus, the 516-residue chain is Cytochrome P450 1A2 (516 aa).

A glycan (O-linked (GlcNAc) serine) is linked at serine 69. Residue phenylalanine 226 participates in substrate binding. Position 458 (cysteine 458) interacts with heme.

This sequence belongs to the cytochrome P450 family. In terms of assembly, interacts with PGRMC1; the interaction requires PGRMC1 homodimerization. Heme serves as cofactor. As to expression, liver.

The protein resides in the endoplasmic reticulum membrane. It localises to the microsome membrane. It carries out the reaction an organic molecule + reduced [NADPH--hemoprotein reductase] + O2 = an alcohol + oxidized [NADPH--hemoprotein reductase] + H2O + H(+). It catalyses the reaction 17beta-estradiol + reduced [NADPH--hemoprotein reductase] + O2 = 2-hydroxy-17beta-estradiol + oxidized [NADPH--hemoprotein reductase] + H2O + H(+). The enzyme catalyses 17beta-estradiol + reduced [NADPH--hemoprotein reductase] + O2 = 4-hydroxy-17beta-estradiol + oxidized [NADPH--hemoprotein reductase] + H2O + H(+). The catalysed reaction is estrone + reduced [NADPH--hemoprotein reductase] + O2 = 2-hydroxyestrone + oxidized [NADPH--hemoprotein reductase] + H2O + H(+). It carries out the reaction estrone + reduced [NADPH--hemoprotein reductase] + O2 = 4-hydroxyestrone + oxidized [NADPH--hemoprotein reductase] + H2O + H(+). It catalyses the reaction cholesterol + reduced [NADPH--hemoprotein reductase] + O2 = 25-hydroxycholesterol + oxidized [NADPH--hemoprotein reductase] + H2O + H(+). The enzyme catalyses all-trans-retinol + reduced [NADPH--hemoprotein reductase] + O2 = all-trans-retinal + oxidized [NADPH--hemoprotein reductase] + 2 H2O + H(+). The catalysed reaction is all-trans-retinal + reduced [NADPH--hemoprotein reductase] + O2 = all-trans-retinoate + oxidized [NADPH--hemoprotein reductase] + H2O + 2 H(+). It carries out the reaction (5Z,8Z,11Z,14Z)-eicosatetraenoate + reduced [NADPH--hemoprotein reductase] + O2 = (14R,15S)-epoxy-(5Z,8Z,11Z)-eicosatrienoate + oxidized [NADPH--hemoprotein reductase] + H2O + H(+). It catalyses the reaction (5Z,8Z,11Z,14Z)-eicosatetraenoate + reduced [NADPH--hemoprotein reductase] + O2 = (14S,15R)-epoxy-(5Z,8Z,11Z)-eicosatrienoate + oxidized [NADPH--hemoprotein reductase] + H2O + H(+). The enzyme catalyses (5Z,8Z,11Z,14Z,17Z)-eicosapentaenoate + reduced [NADPH--hemoprotein reductase] + O2 = (17R,18S)-epoxy-(5Z,8Z,11Z,14Z)-eicosatetraenoate + oxidized [NADPH--hemoprotein reductase] + H2O + H(+). The catalysed reaction is (4Z,7Z,10Z,13Z,16Z,19Z)-docosahexaenoate + reduced [NADPH--hemoprotein reductase] + O2 = (19R,20S)-epoxy-(4Z,7Z,10Z,13Z,16Z)-docosapentaenoate + oxidized [NADPH--hemoprotein reductase] + H2O + H(+). It carries out the reaction (5S)-hydroperoxy-(6E,8Z,11Z,14Z)-eicosatetraenoate = 5-oxo-(6E,8Z,11Z,14Z)-eicosatetraenoate + H2O. It catalyses the reaction (12S)-hydroperoxy-(5Z,8Z,10E,14Z)-eicosatetraenoate = 12-oxo-(5Z,8Z,10E,14Z)-eicosatetraenoate + H2O. The enzyme catalyses (15S)-hydroperoxy-(5Z,8Z,11Z,13E)-eicosatetraenoate = 15-oxo-(5Z,8Z,11Z,13E)-eicosatetraenoate + H2O. The catalysed reaction is (13S)-hydroperoxy-(9Z,11E)-octadecadienoate = 13-oxo-(9Z,11E)-octadecadienoate + H2O. It carries out the reaction (5Z,8Z,11Z,14Z)-eicosatetraenoate + reduced [NADPH--hemoprotein reductase] + O2 = 13-hydroxy-(5Z,8Z,11Z,14Z)-eicosatetraenoate + oxidized [NADPH--hemoprotein reductase] + H2O + H(+). It catalyses the reaction (5Z,8Z,11Z,14Z)-eicosatetraenoate + reduced [NADPH--hemoprotein reductase] + O2 = 19-hydroxy-(5Z,8Z,11Z,14Z)-eicosatetraenoate + oxidized [NADPH--hemoprotein reductase] + H2O + H(+). The enzyme catalyses (9Z,12Z)-octadecadienoate + reduced [NADPH--hemoprotein reductase] + O2 = 11-hydroxy-(9Z,12Z)-octadecadienoate + oxidized [NADPH--hemoprotein reductase] + H2O + H(+). The protein operates within cofactor metabolism; retinol metabolism. It functions in the pathway steroid metabolism; cholesterol metabolism. Its pathway is lipid metabolism; arachidonate metabolism. Functionally, a cytochrome P450 monooxygenase involved in the metabolism of various endogenous substrates, including fatty acids, steroid hormones and vitamins. Mechanistically, uses molecular oxygen inserting one oxygen atom into a substrate, and reducing the second into a water molecule, with two electrons provided by NADPH via cytochrome P450 reductase (NADPH--hemoprotein reductase). Catalyzes the hydroxylation of carbon-hydrogen bonds. Exhibits high catalytic activity for the formation of hydroxyestrogens from estrone (E1) and 17beta-estradiol (E2), namely 2-hydroxy E1 and E2. Metabolizes cholesterol toward 25-hydroxycholesterol, a physiological regulator of cellular cholesterol homeostasis. May act as a major enzyme for all-trans retinoic acid biosynthesis in the liver. Catalyzes two successive oxidative transformation of all-trans retinol to all-trans retinal and then to the active form all-trans retinoic acid. Primarily catalyzes stereoselective epoxidation of the last double bond of polyunsaturated fatty acids (PUFA), displaying a strong preference for the (R,S) stereoisomer. Catalyzes bisallylic hydroxylation and omega-1 hydroxylation of PUFA. May also participate in eicosanoids metabolism by converting hydroperoxide species into oxo metabolites (lipoxygenase-like reaction, NADPH-independent). Plays a role in the oxidative metabolism of xenobiotics. Catalyzes the N-hydroxylation of heterocyclic amines and the O-deethylation of phenacetin. Metabolizes caffeine via N3-demethylation. This is Cytochrome P450 1A2 from Homo sapiens (Human).